Consider the following 294-residue polypeptide: 33 kDa chaperonin (294 aa).

2 disulfide bridges follow: C239–C241 and C272–C275.

The protein belongs to the HSP33 family. Under oxidizing conditions two disulfide bonds are formed involving the reactive cysteines. Under reducing conditions zinc is bound to the reactive cysteines and the protein is inactive.

It localises to the cytoplasm. Functionally, redox regulated molecular chaperone. Protects both thermally unfolding and oxidatively damaged proteins from irreversible aggregation. Plays an important role in the bacterial defense system toward oxidative stress. The sequence is that of 33 kDa chaperonin from Lacticaseibacillus casei (strain BL23) (Lactobacillus casei).